Reading from the N-terminus, the 713-residue chain is Methionine--tRNA ligase (713 aa).

Residues 17 to 27 (PYANGPIHIGH) carry the 'HIGH' region motif. Zn(2+) contacts are provided by Cys149, Cys152, Cys162, and Cys165. A 'KMSKS' region motif is present at residues 345–349 (KLSTS). ATP is bound at residue Thr348. Residues 530–564 (VRTSTPDDDPAGAVGWEDAGAPLLPAGHPIPSGPD) form a disordered region. The region spanning 614-713 (DFTQLDLRAG…TEAEDGSVVR (100 aa)) is the tRNA-binding domain.

It belongs to the class-I aminoacyl-tRNA synthetase family. MetG type 1 subfamily. Homodimer. Requires Zn(2+) as cofactor.

Its subcellular location is the cytoplasm. The enzyme catalyses tRNA(Met) + L-methionine + ATP = L-methionyl-tRNA(Met) + AMP + diphosphate. Is required not only for elongation of protein synthesis but also for the initiation of all mRNA translation through initiator tRNA(fMet) aminoacylation. The protein is Methionine--tRNA ligase of Salinibacter ruber (strain DSM 13855 / M31).